Here is a 360-residue protein sequence, read N- to C-terminus: Peptide chain release factor 1 (360 aa).

N5-methylglutamine is present on Gln235.

It belongs to the prokaryotic/mitochondrial release factor family. In terms of processing, methylated by PrmC. Methylation increases the termination efficiency of RF1.

Its subcellular location is the cytoplasm. Functionally, peptide chain release factor 1 directs the termination of translation in response to the peptide chain termination codons UAG and UAA. This chain is Peptide chain release factor 1, found in Leptothrix cholodnii (strain ATCC 51168 / LMG 8142 / SP-6) (Leptothrix discophora (strain SP-6)).